The primary structure comprises 98 residues: Integration host factor subunit alpha (98 aa).

The tract at residues 51–71 (NFDLRDKNERPGRNPKTGEDI) is disordered. Basic and acidic residues predominate over residues 53 to 69 (DLRDKNERPGRNPKTGE).

The protein belongs to the bacterial histone-like protein family. In terms of assembly, heterodimer of an alpha and a beta chain.

Functionally, this protein is one of the two subunits of integration host factor, a specific DNA-binding protein that functions in genetic recombination as well as in transcriptional and translational control. In Vibrio cholerae serotype O1 (strain ATCC 39541 / Classical Ogawa 395 / O395), this protein is Integration host factor subunit alpha.